The following is a 540-amino-acid chain: GMP synthase [glutamine-hydrolyzing] (540 aa).

One can recognise a Glutamine amidotransferase type-1 domain in the interval 29–222 (KILIVDFGSQ…VRKVAGLTGD (194 aa)). The Nucleophile role is filled by cysteine 106. Active-site residues include histidine 196 and glutamate 198. Residues 223–415 (WTMRAFREEA…LGLPEIFVGR (193 aa)) enclose the GMPS ATP-PPase domain. Residue 250–256 (SGGVDSA) participates in ATP binding.

As to quaternary structure, homodimer.

The catalysed reaction is XMP + L-glutamine + ATP + H2O = GMP + L-glutamate + AMP + diphosphate + 2 H(+). It participates in purine metabolism; GMP biosynthesis; GMP from XMP (L-Gln route): step 1/1. Its function is as follows. Catalyzes the synthesis of GMP from XMP. This Rhodopseudomonas palustris (strain HaA2) protein is GMP synthase [glutamine-hydrolyzing].